The following is a 279-amino-acid chain: RRP15-like protein (279 aa).

Disordered regions lie at residues Met1 to Ala40, Gly56 to Arg120, and Lys200 to Asp279. A compositionally biased stretch (basic and acidic residues) spans Lys73 to Phe83. 2 stretches are compositionally biased toward acidic residues: residues Lys93 to Asp104 and Gln213 to Ala224. The span at Lys232 to Thr245 shows a compositional bias: basic and acidic residues. Over residues Asp267–Asp279 the composition is skewed to acidic residues.

It belongs to the RRP15 family.

This chain is RRP15-like protein, found in Drosophila pseudoobscura pseudoobscura (Fruit fly).